The following is a 141-amino-acid chain: Nucleoside diphosphate kinase (141 aa).

ATP is bound by residues Lys-10, Phe-58, Arg-86, Thr-92, Arg-103, and Asn-113. The active-site Pros-phosphohistidine intermediate is the His-116.

Belongs to the NDK family. In terms of assembly, homotetramer. The cofactor is Mg(2+).

It is found in the cytoplasm. The enzyme catalyses a 2'-deoxyribonucleoside 5'-diphosphate + ATP = a 2'-deoxyribonucleoside 5'-triphosphate + ADP. It carries out the reaction a ribonucleoside 5'-diphosphate + ATP = a ribonucleoside 5'-triphosphate + ADP. Functionally, major role in the synthesis of nucleoside triphosphates other than ATP. The ATP gamma phosphate is transferred to the NDP beta phosphate via a ping-pong mechanism, using a phosphorylated active-site intermediate. This chain is Nucleoside diphosphate kinase, found in Hydrogenovibrio crunogenus (strain DSM 25203 / XCL-2) (Thiomicrospira crunogena).